The sequence spans 211 residues: Cytidylate kinase (211 aa).

7–15 (GPAASGKGT) is an ATP binding site.

The protein belongs to the cytidylate kinase family. Type 1 subfamily.

The protein localises to the cytoplasm. The catalysed reaction is CMP + ATP = CDP + ADP. It catalyses the reaction dCMP + ATP = dCDP + ADP. This is Cytidylate kinase from Rhodopseudomonas palustris (strain BisA53).